We begin with the raw amino-acid sequence, 306 residues long: Beta-lactamase (306 aa).

A signal peptide spans 1 to 34 (MNVKRKATLKFGICIGLLCVSFTGFNSLFGSTHA). The Acyl-ester intermediate role is filled by serine 89. 251 to 253 (KSG) contributes to the substrate binding site.

This sequence belongs to the class-A beta-lactamase family.

The enzyme catalyses a beta-lactam + H2O = a substituted beta-amino acid. Functionally, this protein is a beta-lactamase with a substrate specificity for penicillins. In Bacillus amyloliquefaciens (Bacillus velezensis), this protein is Beta-lactamase (penP).